The chain runs to 231 residues: Floral homeotic protein PMADS 1 (231 aa).

One can recognise an MADS-box domain in the interval 3–58; that stretch reads RGKIQIKRIENQTNRQVTYSKRRNGLFKKANELTVLCDAKVSIIMISSTGKLHEFI. Residues 84–174 enclose the K-box domain; that stretch reads YEKMQEQLRK…LLEFDARQED (91 aa).

Predominantly expressed in petals and stamens, less in carpels and sepals.

The protein localises to the nucleus. Transcription factor involved in the genetic control of flower development. Necessary for the normal development of petals. Absence of the PMADS1 protein causes transformation of petals into sepals. In Petunia hybrida (Petunia), this protein is Floral homeotic protein PMADS 1 (PMADS1).